We begin with the raw amino-acid sequence, 321 residues long: Phospho-N-acetylmuramoyl-pentapeptide-transferase (321 aa).

10 helical membrane passes run 6–26 (MLIP…LFIG), 53–73 (TMGG…VGIW), 77–97 (LTLS…LGFY), 121–141 (ILGA…HTLW), 144–164 (IIGN…WLVG), 175–195 (LDGL…IIAA), 200–220 (TDVL…LMFN), 226–246 (IFMG…VAIL), 251–271 (WSLL…ILQV), and 301–321 (IDLT…AFFL).

It belongs to the glycosyltransferase 4 family. MraY subfamily. Mg(2+) is required as a cofactor.

It localises to the cell membrane. It catalyses the reaction UDP-N-acetyl-alpha-D-muramoyl-L-alanyl-gamma-D-glutamyl-L-lysyl-D-alanyl-D-alanine + di-trans,octa-cis-undecaprenyl phosphate = Mur2Ac(oyl-L-Ala-gamma-D-Glu-L-Lys-D-Ala-D-Ala)-di-trans,octa-cis-undecaprenyl diphosphate + UMP. It participates in cell wall biogenesis; peptidoglycan biosynthesis. Catalyzes the initial step of the lipid cycle reactions in the biosynthesis of the cell wall peptidoglycan: transfers peptidoglycan precursor phospho-MurNAc-pentapeptide from UDP-MurNAc-pentapeptide onto the lipid carrier undecaprenyl phosphate, yielding undecaprenyl-pyrophosphoryl-MurNAc-pentapeptide, known as lipid I. In Lacticaseibacillus paracasei (strain ATCC 334 / BCRC 17002 / CCUG 31169 / CIP 107868 / KCTC 3260 / NRRL B-441) (Lactobacillus paracasei), this protein is Phospho-N-acetylmuramoyl-pentapeptide-transferase.